The primary structure comprises 78 residues: uncharacterized protein (78 aa).

Helical transmembrane passes span 7 to 27 (ICLVLTIIGAINWGLIGFFQF) and 41 to 61 (LSRIIYGLVGIAGLINLGLLF).

The protein resides in the cell membrane. This is an uncharacterized protein from Bacillus subtilis (strain 168).